We begin with the raw amino-acid sequence, 88 residues long: Small ribosomal subunit protein uS15 (88 aa).

This sequence belongs to the universal ribosomal protein uS15 family. In terms of assembly, part of the 30S ribosomal subunit. Forms a bridge to the 50S subunit in the 70S ribosome, contacting the 23S rRNA.

Its function is as follows. One of the primary rRNA binding proteins, it binds directly to 16S rRNA where it helps nucleate assembly of the platform of the 30S subunit by binding and bridging several RNA helices of the 16S rRNA. In terms of biological role, forms an intersubunit bridge (bridge B4) with the 23S rRNA of the 50S subunit in the ribosome. The sequence is that of Small ribosomal subunit protein uS15 from Geotalea daltonii (strain DSM 22248 / JCM 15807 / FRC-32) (Geobacter daltonii).